The chain runs to 133 residues: Putative actin-depolymerizing factor 11 (133 aa).

An ADF-H domain is found at M1–N133.

Belongs to the actin-binding proteins ADF family.

It is found in the cytoplasm. It localises to the cytoskeleton. In terms of biological role, actin-depolymerizing protein. Severs actin filaments (F-actin) and binds to actin monomers. In Arabidopsis thaliana (Mouse-ear cress), this protein is Putative actin-depolymerizing factor 11 (ADF11).